The primary structure comprises 448 residues: MKGFIDDANYSVGLLDEGTNLGNVIDNYVYEHTLTGKNAFFVGDLGKIVKKHSQWQNVVAQIKPFYMVKCNSTPAVLEILAALGTGFACSTKNEMALVQELGVSPENIIYTSPCKQASQIKYAAKVGVNIMTCDNEVELKKIARNHPNAKVLLHIATEDNIGGEDGNMKFGTTLKNCRHLLECAKELDVQIIGVKFHISSACKEYQVYVHALSDARCVFDMAGEFGFTMNMLDIGGGFTGTEIQLEEVNHVISPLLDIYFPEGSGIQIISEPGSYYVSSAFTLAVNIIAKKVVENDKLSSGVEKNGSDEPAFVYYMNDGVYGSFASKLSEDLNTVPEVHKKYKEDEPLFTSSLWGPSCDELDQIVESCLLPELSVGDWLIFDNMGADSLHGPSAFSDTQRPAIYFMMSLSDWYEMQDAGITSDAMMKNFFFAPSCIQLSQEDNFSTEA.

It belongs to the Orn/Lys/Arg decarboxylase class-II family. ODC antizyme inhibitor subfamily. As to quaternary structure, monomer. Interacts with OAZ1 and OAZ3; this interaction disrupts the interaction between the antizyme and ODC1. In terms of processing, ubiquitinated, leading to its proteasomal degradation; a process that is reduced in presence of antizyme OAZ1. Expressed in various tissues including liver, heart and kidney.

It is found in the nucleus. Functionally, antizyme inhibitor (AZI) protein that positively regulates ornithine decarboxylase (ODC) activity and polyamine uptake. AZI is an enzymatically inactive ODC homolog that counteracts the negative effect of ODC antizymes (AZs) OAZ1, OAZ2 and OAZ3 on ODC activity by competing with ODC for antizyme-binding. Inhibits antizyme-dependent ODC degradation and releases ODC monomers from their inactive complex with antizymes, leading to formation of the catalytically active ODC homodimer and restoring polyamine production. The polypeptide is Antizyme inhibitor 1 (Azin1) (Rattus norvegicus (Rat)).